The following is a 285-amino-acid chain: Shikimate dehydrogenase (NADP(+)) (285 aa).

Shikimate contacts are provided by residues 19-21 and Thr66; that span reads SLS. The active-site Proton acceptor is Lys70. Shikimate contacts are provided by Asn91 and Asp107. NADP(+) is bound by residues 129 to 133 and Leu228; that span reads GSGGA. Tyr230 lines the shikimate pocket. Gly251 is an NADP(+) binding site.

Belongs to the shikimate dehydrogenase family. As to quaternary structure, homodimer.

It catalyses the reaction shikimate + NADP(+) = 3-dehydroshikimate + NADPH + H(+). It participates in metabolic intermediate biosynthesis; chorismate biosynthesis; chorismate from D-erythrose 4-phosphate and phosphoenolpyruvate: step 4/7. Involved in the biosynthesis of the chorismate, which leads to the biosynthesis of aromatic amino acids. Catalyzes the reversible NADPH linked reduction of 3-dehydroshikimate (DHSA) to yield shikimate (SA). The sequence is that of Shikimate dehydrogenase (NADP(+)) from Prochlorococcus marinus subsp. pastoris (strain CCMP1986 / NIES-2087 / MED4).